The chain runs to 307 residues: Ribosomal RNA small subunit methyltransferase H (307 aa).

S-adenosyl-L-methionine contacts are provided by residues 32-34, aspartate 52, phenylalanine 78, aspartate 99, and glutamine 106; that span reads GGH.

This sequence belongs to the methyltransferase superfamily. RsmH family.

The protein localises to the cytoplasm. It carries out the reaction cytidine(1402) in 16S rRNA + S-adenosyl-L-methionine = N(4)-methylcytidine(1402) in 16S rRNA + S-adenosyl-L-homocysteine + H(+). Functionally, specifically methylates the N4 position of cytidine in position 1402 (C1402) of 16S rRNA. In Caldicellulosiruptor saccharolyticus (strain ATCC 43494 / DSM 8903 / Tp8T 6331), this protein is Ribosomal RNA small subunit methyltransferase H.